Consider the following 238-residue polypeptide: Ribosomal RNA small subunit methyltransferase G (238 aa).

S-adenosyl-L-methionine is bound by residues Gly77, Phe82, 128 to 129, and Arg146; that span reads AE. Residues 216 to 238 form a disordered region; that stretch reads KKRQTPKKYPRKPGTPNKEPLLK.

Belongs to the methyltransferase superfamily. RNA methyltransferase RsmG family.

It is found in the cytoplasm. Functionally, specifically methylates the N7 position of guanine in position 535 of 16S rRNA. In Macrococcus caseolyticus (strain JCSC5402) (Macrococcoides caseolyticum), this protein is Ribosomal RNA small subunit methyltransferase G.